We begin with the raw amino-acid sequence, 295 residues long: MANLKEIKLKIGSVKNTQKTTKAMKLVSSAKLTRTRQLSEQARSYAHKINDVLSDIAARVSKVQDDGNIGRSFLQNDNPKTVDIVFVTADKGLCGGFNMATIKTVSRLISEYEAKGTKVRLRAAGRKGVDFFSFQGMTIEQKATDLSSAPDYDRAAEFIHNVVEDFKNEVTDKVVIVYNGFLNMLSQEIRVRDLLPISLDDVKIQDNASMLNIEPEEDEDEVLNELTDKYIDFNMYYALIDSLAAEHSARMQAMEAASKNAKEKVNSLTVEYNKARQAAITTELIEIISGVEALK.

It belongs to the ATPase gamma chain family. In terms of assembly, F-type ATPases have 2 components, CF(1) - the catalytic core - and CF(0) - the membrane proton channel. CF(1) has five subunits: alpha(3), beta(3), gamma(1), delta(1), epsilon(1). CF(0) has three main subunits: a, b and c.

The protein resides in the cell inner membrane. In terms of biological role, produces ATP from ADP in the presence of a proton gradient across the membrane. The gamma chain is believed to be important in regulating ATPase activity and the flow of protons through the CF(0) complex. The polypeptide is ATP synthase gamma chain (Aliarcobacter butzleri (strain RM4018) (Arcobacter butzleri)).